The primary structure comprises 69 residues: Cell division protein ZapB (69 aa).

Positions 3–60 form a coiled coil; that stretch reads LELFNQLEQKVQNAVETIEMLKMEAEELREENTRLKQERDEWERRLNGLLGKFQEIED.

The protein belongs to the ZapB family. Homodimer. The ends of the coiled-coil dimer bind to each other, forming polymers. Interacts with FtsZ.

The protein resides in the cytoplasm. In terms of biological role, non-essential, abundant cell division factor that is required for proper Z-ring formation. It is recruited early to the divisome by direct interaction with FtsZ, stimulating Z-ring assembly and thereby promoting cell division earlier in the cell cycle. Its recruitment to the Z-ring requires functional FtsA or ZipA. This Chromohalobacter salexigens (strain ATCC BAA-138 / DSM 3043 / CIP 106854 / NCIMB 13768 / 1H11) protein is Cell division protein ZapB.